A 96-amino-acid polypeptide reads, in one-letter code: Phosphoribosyl-ATP pyrophosphatase (96 aa).

The protein belongs to the PRA-PH family.

The protein resides in the cytoplasm. It catalyses the reaction 1-(5-phospho-beta-D-ribosyl)-ATP + H2O = 1-(5-phospho-beta-D-ribosyl)-5'-AMP + diphosphate + H(+). The protein operates within amino-acid biosynthesis; L-histidine biosynthesis; L-histidine from 5-phospho-alpha-D-ribose 1-diphosphate: step 2/9. The protein is Phosphoribosyl-ATP pyrophosphatase of Methanococcus aeolicus (strain ATCC BAA-1280 / DSM 17508 / OCM 812 / Nankai-3).